An 80-amino-acid chain; its full sequence is Polcalcin Cyn d 7 (80 aa).

EF-hand domains are found at residues 2–37 (ADTG…LGST) and 40–72 (DEVQ…NPGL). Ca(2+)-binding residues include Asp15, Asn17, Asp19, Lys21, Glu26, Asp50, Asp52, Asp54, and Glu61.

In Cynodon dactylon (Bermuda grass), this protein is Polcalcin Cyn d 7.